Consider the following 318-residue polypeptide: Transaldolase (318 aa).

The active-site Schiff-base intermediate with substrate is the K132.

It belongs to the transaldolase family. Type 1 subfamily. In terms of assembly, homodimer.

The protein resides in the cytoplasm. The catalysed reaction is D-sedoheptulose 7-phosphate + D-glyceraldehyde 3-phosphate = D-erythrose 4-phosphate + beta-D-fructose 6-phosphate. It participates in carbohydrate degradation; pentose phosphate pathway; D-glyceraldehyde 3-phosphate and beta-D-fructose 6-phosphate from D-ribose 5-phosphate and D-xylulose 5-phosphate (non-oxidative stage): step 2/3. Transaldolase is important for the balance of metabolites in the pentose-phosphate pathway. The protein is Transaldolase of Shewanella sp. (strain MR-7).